The primary structure comprises 572 residues: Hexokinase (572 aa).

One can recognise a Hexokinase domain in the interval 49 to 492 (DEPPISLETV…SGKGAALITA (444 aa)). Residues 105–237 (NGTEEGRFIA…DIKVEVVALI (133 aa)) are hexokinase small subdomain. D-glucose 6-phosphate-binding positions include 116–120 (DLGGT) and S185. 116-121 (DLGGTN) is an ATP binding site. Substrate-binding positions include 185-186 (SY), 202-203 (TK), and 238-239 (ND). Positions 238–481 (NDTVGTMVAA…LKFKLLQTAD (244 aa)) are hexokinase large subdomain. Residues D239 and T263 each contribute to the D-glucose 6-phosphate site. ATP is bound at residue T263. Residues N266, E297, and D331 each coordinate substrate. Residues 336-337 (GK), 373-377 (TKYIS), and 448-452 (STYKY) contribute to the ATP site. D-glucose 6-phosphate is bound by residues 446–448 (DGS) and S483.

This sequence belongs to the hexokinase family.

It catalyses the reaction a D-hexose + ATP = a D-hexose 6-phosphate + ADP + H(+). It carries out the reaction D-mannose + ATP = D-mannose 6-phosphate + ADP + H(+). The catalysed reaction is D-fructose + ATP = D-fructose 6-phosphate + ADP + H(+). The enzyme catalyses D-glucose + ATP = D-glucose 6-phosphate + ADP + H(+). It functions in the pathway carbohydrate metabolism; hexose metabolism. The protein operates within carbohydrate degradation; glycolysis; D-glyceraldehyde 3-phosphate and glycerone phosphate from D-glucose: step 1/4. Its activity is regulated as follows. Activated by glucose-6-phosphate. Inhibited by N-acetylglucosamine, glucosamine, mannoheptulose and ADP. Active against glucose, fructose, mannose, maltose and galactose. This chain is Hexokinase, found in Brugia malayi (Filarial nematode worm).